The chain runs to 346 residues: MLKKPLSAVTWLCIFIVAFVSHPAWLQKLSKHKTPAQPQLKAANCCEEVKELKAQVANLSSLLSELNKKQERDWVSVVMQVMELESNSKRMESRLTDAESKYSEMNNQIDIMQLQAAQTVTQTSADAIYDCSSLYQKNYRISGVYKLPPDDFLGSPELEVFCDMETSGGGWTIIQRRKSGLVSFYRDWKQYKQGFGSIRGDFWLGNEHIHRLSRQPTRLRVEMEDWEGNLRYAEYSHFVLGNELNSYRLFLGNYTGNVGNDALQYHNNTAFSTKDKDNDNCLDKCAQLRKGGYWYNCCTDSNLNGVYYRLGEHNKHLDGITWYGWHGSTYSLKRVEMKIRPEDFKP.

The N-terminal stretch at 1-26 (MLKKPLSAVTWLCIFIVAFVSHPAWL) is a signal peptide. Residues 39–119 (QLKAANCCEE…DIMQLQAAQT (81 aa)) are a coiled coil. An N-linked (GlcNAc...) asparagine glycan is attached at Asn-58. Residues 122–343 (QTSADAIYDC…RVEMKIRPED (222 aa)) form the Fibrinogen C-terminal domain. Cys-131 and Cys-162 are joined by a disulfide. Residues Asn-253 and Asn-267 are each glycosylated (N-linked (GlcNAc...) asparagine). Cys-285 and Cys-298 form a disulfide bridge.

In terms of assembly, homotetramer; disulfide-linked. Highly expressed in the cornea (at protein level). Expression is restricted to the stromal layer. Also detected at the junction between the corneal stromal layer and the conjuctiva. Not detected in the sclera.

It localises to the secreted. Has a role in the formation and organization of the extracellular matrix. In the eye, it functions as a mediator of dexamethasone-induced matrix deposition in the trabecular meshwork, the tissue responsible for the outflow of the ocular aqueous humor and for the maintenance of intraocular pressure. Is a negative regulator of angiogenesis in the cornea, and plays a major role in maintaining corneal avascularity and transparency. The sequence is that of Angiopoietin-related protein 7 (ANGPTL7) from Homo sapiens (Human).